The primary structure comprises 120 residues: Ribonuclease P protein component (120 aa).

Belongs to the RnpA family. As to quaternary structure, consists of a catalytic RNA component (M1 or rnpB) and a protein subunit.

The enzyme catalyses Endonucleolytic cleavage of RNA, removing 5'-extranucleotides from tRNA precursor.. Its function is as follows. RNaseP catalyzes the removal of the 5'-leader sequence from pre-tRNA to produce the mature 5'-terminus. It can also cleave other RNA substrates such as 4.5S RNA. The protein component plays an auxiliary but essential role in vivo by binding to the 5'-leader sequence and broadening the substrate specificity of the ribozyme. This is Ribonuclease P protein component from Azoarcus sp. (strain BH72).